Here is a 110-residue protein sequence, read N- to C-terminus: Minor capsid protein VP2 (110 aa).

This sequence belongs to the vesivirus VP2 protein family. In terms of assembly, homooligomer. The portal-like structure consists in 12 copies of VP2. Interacts with capsid protein VP1.

It is found in the virion. The protein localises to the host cytoplasm. In terms of biological role, minor structural protein that forms a portal-like structure at a unique three-fold axis of symmetry, following binding to the host receptor. The channel formed by VP2 may allow the delivery of the viral genome through the host endosomal membrane. The protein is Minor capsid protein VP2 of Vesicular exanthema of swine virus serotype A48 (isolate Swine/United States/A48/1948) (VESV).